We begin with the raw amino-acid sequence, 277 residues long: Large ribosomal subunit protein uL2 (277 aa).

Disordered regions lie at residues 37–60 (KNST…GHKH) and 223–265 (VVMN…KRTD). Over residues 39–49 (STAGRNSNGHI) the composition is skewed to polar residues. A compositionally biased stretch (basic residues) spans 50 to 60 (TTRHKGGGHKH). A compositionally biased stretch (basic and acidic residues) spans 229–244 (DHPHGGGEGRTGEARE).

Belongs to the universal ribosomal protein uL2 family. In terms of assembly, part of the 50S ribosomal subunit. Forms a bridge to the 30S subunit in the 70S ribosome.

Its function is as follows. One of the primary rRNA binding proteins. Required for association of the 30S and 50S subunits to form the 70S ribosome, for tRNA binding and peptide bond formation. It has been suggested to have peptidyltransferase activity; this is somewhat controversial. Makes several contacts with the 16S rRNA in the 70S ribosome. The polypeptide is Large ribosomal subunit protein uL2 (Neisseria meningitidis serogroup C (strain 053442)).